A 430-amino-acid chain; its full sequence is MAARLLLRSLRVLKARSAPRPPPSARCSHSGAEARLETPSAKKLTDVGIRRIFSSEHDIFRESVRKFFQEEVIPHHTEWEKAGEVSREVWEKAGKQGLLGINIAEKHGGIGGDLLSTAVTWEEQAYSNCTGPGFSLHSDIVMPYIANYGTKEQIEKFIPQMTAGKCIGAIAMTEPGAGSDLQGVRTNAKRSGSDWILNGSKVFITNGWLSDLVIVVAVTNREARSPAHGISLFLVENGMKGFIKGRKLHKMGMKAQDTAELFFEDVRLPANALLGEENKGFYYLMQELPQERLLIAELAISACEFMFEETRNYVKQRKAFGKTVAHIQTVQHKLAELKTHICVTRAFVDSCLQLHETKRLDSGSASMAKYWASELQNSVAYECVQLHGGWGYMWEYPIAKAYVDARVQPIYGGTNEIMKELIARQIVSDS.

The N-terminal 30 residues, 1–30 (MAARLLLRSLRVLKARSAPRPPPSARCSHS), are a transit peptide targeting the mitochondrion. Residues 17–39 (SAPRPPPSARCSHSGAEARLETP) are disordered. Residue Lys42 is modified to N6-acetyllysine. A phosphoserine mark is found at Ser54 and Ser55. Residues Lys66 and Lys81 each carry the N6-acetyllysine; alternate modification. N6-succinyllysine; alternate occurs at positions 66 and 81. Residues Lys92 and Lys95 each carry the N6-acetyllysine modification. At Lys165 the chain carries N6-succinyllysine. 170 to 179 (IAMTEPGAGS) provides a ligand contact to FAD. Ser179 serves as a coordination point for substrate. Ser191 carries the phosphoserine modification. 203-205 (FIT) is a binding site for FAD. Residue 227-228 (AH) participates in substrate binding. Lys240 bears the N6-succinyllysine mark. Residues Lys254 and Lys279 each carry the N6-acetyllysine; alternate modification. Lys254 and Lys279 each carry N6-succinyllysine; alternate. Substrate-binding positions include Tyr282 and 289-292 (PQER). Glu291 functions as the Proton acceptor in the catalytic mechanism. Arg317 lines the FAD pocket. Lys318 carries the post-translational modification N6-acetyllysine. An N6-acetyllysine; alternate modification is found at Lys322. At Lys322 the chain carries N6-succinyllysine; alternate. Residue Gln328 coordinates FAD. Lys358 is subject to N6-acetyllysine. Ser362 carries the phosphoserine modification. 385-389 (QLHGG) provides a ligand contact to FAD. 412 to 413 (GG) lines the substrate pocket. 414–416 (TNE) is a binding site for FAD.

This sequence belongs to the acyl-CoA dehydrogenase family. As to quaternary structure, homotetramer. It depends on FAD as a cofactor. Acetylation at Lys-318 and Lys-322 in proximity of the cofactor-binding sites strongly reduces catalytic activity. These sites are deacetylated by SIRT3. As to expression, expressed in heart, skeletal muscle, kidney, and brain. Expressed in liver (at protein level).

It localises to the mitochondrion matrix. It catalyses the reaction a long-chain 2,3-saturated fatty acyl-CoA + oxidized [electron-transfer flavoprotein] + H(+) = a long-chain (2E)-enoyl-CoA + reduced [electron-transfer flavoprotein]. The catalysed reaction is oxidized [electron-transfer flavoprotein] + hexadecanoyl-CoA + H(+) = (2E)-hexadecenoyl-CoA + reduced [electron-transfer flavoprotein]. It carries out the reaction hexanoyl-CoA + oxidized [electron-transfer flavoprotein] + H(+) = (2E)-hexenoyl-CoA + reduced [electron-transfer flavoprotein]. The enzyme catalyses octanoyl-CoA + oxidized [electron-transfer flavoprotein] + H(+) = (2E)-octenoyl-CoA + reduced [electron-transfer flavoprotein]. It catalyses the reaction decanoyl-CoA + oxidized [electron-transfer flavoprotein] + H(+) = (2E)-decenoyl-CoA + reduced [electron-transfer flavoprotein]. The catalysed reaction is dodecanoyl-CoA + oxidized [electron-transfer flavoprotein] + H(+) = (2E)-dodecenoyl-CoA + reduced [electron-transfer flavoprotein]. It carries out the reaction tetradecanoyl-CoA + oxidized [electron-transfer flavoprotein] + H(+) = (2E)-tetradecenoyl-CoA + reduced [electron-transfer flavoprotein]. The enzyme catalyses octadecanoyl-CoA + oxidized [electron-transfer flavoprotein] + H(+) = (2E)-octadecenoyl-CoA + reduced [electron-transfer flavoprotein]. It catalyses the reaction eicosanoyl-CoA + oxidized [electron-transfer flavoprotein] + H(+) = (2E)-eicosenoyl-CoA + reduced [electron-transfer flavoprotein]. The catalysed reaction is docosanoyl-CoA + oxidized [electron-transfer flavoprotein] + H(+) = (2E)-docosenoyl-CoA + reduced [electron-transfer flavoprotein]. It carries out the reaction tetracosanoyl-CoA + oxidized [electron-transfer flavoprotein] + H(+) = (2E)-tetracosenoyl-CoA + reduced [electron-transfer flavoprotein]. The enzyme catalyses (5E)-tetradecenoyl-CoA + oxidized [electron-transfer flavoprotein] + H(+) = (2E,5E)-tetradecadienoyl-CoA + reduced [electron-transfer flavoprotein]. It catalyses the reaction (5Z)-tetradecenoyl-CoA + oxidized [electron-transfer flavoprotein] + H(+) = (2E,5Z)-tetradecadienoyl-CoA + reduced [electron-transfer flavoprotein]. The catalysed reaction is oxidized [electron-transfer flavoprotein] + (9Z)-octadecenoyl-CoA + H(+) = (2E,9Z)-octadecadienoyl-CoA + reduced [electron-transfer flavoprotein]. Its pathway is lipid metabolism; mitochondrial fatty acid beta-oxidation. Long-chain specific acyl-CoA dehydrogenase is one of the acyl-CoA dehydrogenases that catalyze the first step of mitochondrial fatty acid beta-oxidation, an aerobic process breaking down fatty acids into acetyl-CoA and allowing the production of energy from fats. The first step of fatty acid beta-oxidation consists in the removal of one hydrogen from C-2 and C-3 of the straight-chain fatty acyl-CoA thioester, resulting in the formation of trans-2-enoyl-CoA. Among the different mitochondrial acyl-CoA dehydrogenases, long-chain specific acyl-CoA dehydrogenase can act on saturated and unsaturated acyl-CoAs with 6 to 24 carbons with a preference for 8 to 18 carbons long primary chains. The protein is Long-chain specific acyl-CoA dehydrogenase, mitochondrial of Mus musculus (Mouse).